The sequence spans 90 residues: Long neurotoxin 1 (90 aa).

An N-terminal signal peptide occupies residues 1–21 (MKTLLLTLVVVTIVCLDVGNS). Cystine bridges form between Cys24–Cys42, Cys35–Cys63, Cys48–Cys52, Cys67–Cys78, and Cys79–Cys84.

Belongs to the three-finger toxin family. Long-chain subfamily. Type II alpha-neurotoxin sub-subfamily. In terms of tissue distribution, expressed by the venom gland.

The protein resides in the secreted. Binds with high affinity to muscular (alpha-1/CHRNA1) and neuronal (alpha-7/CHRNA7) nicotinic acetylcholine receptor (nAChR) and inhibits acetylcholine from binding to the receptor, thereby impairing neuromuscular and neuronal transmission. This Austrelaps superbus (Lowland copperhead snake) protein is Long neurotoxin 1.